Reading from the N-terminus, the 385-residue chain is Methionyl-tRNA formyltransferase, mitochondrial (385 aa).

This sequence belongs to the Fmt family.

Its subcellular location is the mitochondrion. The catalysed reaction is L-methionyl-tRNA(fMet) + (6R)-10-formyltetrahydrofolate = N-formyl-L-methionyl-tRNA(fMet) + (6S)-5,6,7,8-tetrahydrofolate + H(+). Methionyl-tRNA formyltransferase that formylates methionyl-tRNA in mitochondria and is crucial for translation initiation. This is Methionyl-tRNA formyltransferase, mitochondrial (Mtfmt) from Rattus norvegicus (Rat).